A 155-amino-acid polypeptide reads, in one-letter code: Ribonuclease H (155 aa).

Positions 1–142 (MLKQVEIFTD…CDELARNAAG (142 aa)) constitute an RNase H type-1 domain. Residues aspartate 10, glutamate 48, aspartate 70, and aspartate 134 each coordinate Mg(2+).

The protein belongs to the RNase H family. In terms of assembly, monomer. Mg(2+) serves as cofactor.

The protein resides in the cytoplasm. The enzyme catalyses Endonucleolytic cleavage to 5'-phosphomonoester.. Functionally, endonuclease that specifically degrades the RNA of RNA-DNA hybrids. This is Ribonuclease H from Erwinia tasmaniensis (strain DSM 17950 / CFBP 7177 / CIP 109463 / NCPPB 4357 / Et1/99).